A 1080-amino-acid polypeptide reads, in one-letter code: Carbamoyl phosphate synthase large chain (1080 aa).

The interval 1–403 is carboxyphosphate synthetic domain; sequence MPKRTDLETI…SLQKALRGLE (403 aa). ATP is bound by residues R129, R169, G175, G176, E208, V210, E215, G241, V242, H243, Q285, and E299. Residues 133-328 form the ATP-grasp 1 domain; sequence RVAMGEIGLD…IAKVAAKLAV (196 aa). Positions 285, 299, and 301 each coordinate Mg(2+). The Mn(2+) site is built by Q285, E299, and N301. The oligomerization domain stretch occupies residues 404–554; the sequence is TGKIGLDPTG…YSTYEDECEA (151 aa). The carbamoyl phosphate synthetic domain stretch occupies residues 555-942; that stretch reads LPTDRDKIMI…AFARAQEAGG (388 aa). In terms of domain architecture, ATP-grasp 2 spans 679-876; sequence QQLVDKLGLK…LAKIAARCMA (198 aa). Residues R715, R754, L756, E761, G787, V788, H789, S790, Q830, and E847 each coordinate ATP. Mg(2+) is bound by residues Q830, E847, and N849. The Mn(2+) site is built by Q830, E847, and N849. The 138-residue stretch at 943–1080 folds into the MGS-like domain; the sequence is IKAPPLGKAF…LQELHKELEA (138 aa). Residues 943–1080 are allosteric domain; sequence IKAPPLGKAF…LQELHKELEA (138 aa).

Belongs to the CarB family. As to quaternary structure, composed of two chains; the small (or glutamine) chain promotes the hydrolysis of glutamine to ammonia, which is used by the large (or ammonia) chain to synthesize carbamoyl phosphate. Tetramer of heterodimers (alpha,beta)4. It depends on Mg(2+) as a cofactor. Mn(2+) serves as cofactor.

It catalyses the reaction hydrogencarbonate + L-glutamine + 2 ATP + H2O = carbamoyl phosphate + L-glutamate + 2 ADP + phosphate + 2 H(+). The catalysed reaction is hydrogencarbonate + NH4(+) + 2 ATP = carbamoyl phosphate + 2 ADP + phosphate + 2 H(+). It participates in amino-acid biosynthesis; L-arginine biosynthesis; carbamoyl phosphate from bicarbonate: step 1/1. It functions in the pathway pyrimidine metabolism; UMP biosynthesis via de novo pathway; (S)-dihydroorotate from bicarbonate: step 1/3. Large subunit of the glutamine-dependent carbamoyl phosphate synthetase (CPSase). CPSase catalyzes the formation of carbamoyl phosphate from the ammonia moiety of glutamine, carbonate, and phosphate donated by ATP, constituting the first step of 2 biosynthetic pathways, one leading to arginine and/or urea and the other to pyrimidine nucleotides. The large subunit (synthetase) binds the substrates ammonia (free or transferred from glutamine from the small subunit), hydrogencarbonate and ATP and carries out an ATP-coupled ligase reaction, activating hydrogencarbonate by forming carboxy phosphate which reacts with ammonia to form carbamoyl phosphate. The polypeptide is Carbamoyl phosphate synthase large chain (Xanthomonas axonopodis pv. citri (strain 306)).